Reading from the N-terminus, the 762-residue chain is 5-methyltetrahydropteroyltriglutamate--homocysteine methyltransferase (762 aa).

5-methyltetrahydropteroyltri-L-glutamate-binding positions include 16–19 and Lys117; that span reads RELK. Residues 438 to 440 and Glu491 contribute to the L-homocysteine site; that span reads IGS. Residues 438–440 and Glu491 each bind L-methionine; that span reads IGS. 5-methyltetrahydropteroyltri-L-glutamate-binding positions include 522 to 523 and Trp568; that span reads RC. Residue Asp606 participates in L-homocysteine binding. Asp606 contacts L-methionine. Residue Glu612 participates in 5-methyltetrahydropteroyltri-L-glutamate binding. Residues His648, Cys650, and Glu672 each contribute to the Zn(2+) site. His701 (proton donor) is an active-site residue. Cys733 contributes to the Zn(2+) binding site.

The protein belongs to the vitamin-B12 independent methionine synthase family. The cofactor is Zn(2+).

The enzyme catalyses 5-methyltetrahydropteroyltri-L-glutamate + L-homocysteine = tetrahydropteroyltri-L-glutamate + L-methionine. It functions in the pathway amino-acid biosynthesis; L-methionine biosynthesis via de novo pathway; L-methionine from L-homocysteine (MetE route): step 1/1. Its function is as follows. Catalyzes the transfer of a methyl group from 5-methyltetrahydrofolate to homocysteine resulting in methionine formation. This Pseudomonas fluorescens (strain ATCC BAA-477 / NRRL B-23932 / Pf-5) protein is 5-methyltetrahydropteroyltriglutamate--homocysteine methyltransferase.